Here is a 198-residue protein sequence, read N- to C-terminus: MSESSGTAFGGRRAIPPNTSNAAENDPPTVELQGLVPRGFNPQDYLNVTNVHLFKERWDSNKVDHHTDKYSNDKLIVRRGQSFYIQIDFNRPYDPTRDLFRVEYVIGLYPQENKGTYIPVPLVSELQSGKWGAKVVMREDRSVRLSVQSSADCIVGKFRMYVAVWTPYGVIRTSRNPETDTYILFNPWCEEDAVYLEN.

Residues 1-36 (MSESSGTAFGGRRAIPPNTSNAAENDPPTVELQGLV) are disordered. At Ser-2 the chain carries N-acetylserine. The propeptide at 2-38 (SESSGTAFGGRRAIPPNTSNAAENDPPTVELQGLVPR) is activation peptide.

Belongs to the transglutaminase superfamily. Transglutaminase family. In terms of assembly, tetramer of two A chains (F13A1) and two B (F13B) chains. Ca(2+) serves as cofactor. In terms of processing, the activation peptide is released by thrombin.

It is found in the cytoplasm. The protein resides in the secreted. The catalysed reaction is L-glutaminyl-[protein] + L-lysyl-[protein] = [protein]-L-lysyl-N(6)-5-L-glutamyl-[protein] + NH4(+). Functionally, factor XIII is activated by thrombin and calcium ion to a transglutaminase that catalyzes the formation of gamma-glutamyl-epsilon-lysine cross-links between fibrin chains, thus stabilizing the fibrin clot. Also cross-link alpha-2-plasmin inhibitor, or fibronectin, to the alpha chains of fibrin. In Bos taurus (Bovine), this protein is Coagulation factor XIII A chain (F13A1).